Here is a 149-residue protein sequence, read N- to C-terminus: Inner membrane protein YidI (149 aa).

At 1-8 (MGIIAQNK) the chain is on the cytoplasmic side. The chain crosses the membrane as a helical span at residues 9 to 31 (ISSLGMLFGAIALMMGIIHFSFG). Residues 32-77 (PFSAPPPTFESIVADKTAEIKRGLLAGIKGEKITTVEKKEDVDVDK) lie on the Periplasmic side of the membrane. A helical transmembrane segment spans residues 78–97 (ILNQSGIALAIAALLCAFIG). Topologically, residues 98 to 117 (GMRKENRWGIRGALVFGGGT) are cytoplasmic. Residues 118-140 (LAFHTLLFGIGIVCSILLIFLIF) traverse the membrane as a helical segment. Residues 141–149 (SFLTGGSLV) lie on the Periplasmic side of the membrane.

Its subcellular location is the cell inner membrane. In Escherichia coli (strain K12), this protein is Inner membrane protein YidI (yidI).